Here is a 175-residue protein sequence, read N- to C-terminus: Putative FAS1 domain-containing protein 081L (175 aa).

One can recognise an FAS1 domain in the interval 28 to 172; the sequence is GPIVPSVWTI…GLVHIVDQFP (145 aa).

This chain is Putative FAS1 domain-containing protein 081L, found in Invertebrate iridescent virus 3 (IIV-3).